Here is a 103-residue protein sequence, read N- to C-terminus: Iron-sulfur cluster assembly protein CyaY (103 aa).

This sequence belongs to the frataxin family.

Its function is as follows. Involved in iron-sulfur (Fe-S) cluster assembly. May act as a regulator of Fe-S biogenesis. In Rickettsia peacockii (strain Rustic), this protein is Iron-sulfur cluster assembly protein CyaY.